The following is a 574-amino-acid chain: Proline--tRNA ligase (574 aa).

This sequence belongs to the class-II aminoacyl-tRNA synthetase family. ProS type 1 subfamily. In terms of assembly, homodimer.

Its subcellular location is the cytoplasm. The catalysed reaction is tRNA(Pro) + L-proline + ATP = L-prolyl-tRNA(Pro) + AMP + diphosphate. In terms of biological role, catalyzes the attachment of proline to tRNA(Pro) in a two-step reaction: proline is first activated by ATP to form Pro-AMP and then transferred to the acceptor end of tRNA(Pro). As ProRS can inadvertently accommodate and process non-cognate amino acids such as alanine and cysteine, to avoid such errors it has two additional distinct editing activities against alanine. One activity is designated as 'pretransfer' editing and involves the tRNA(Pro)-independent hydrolysis of activated Ala-AMP. The other activity is designated 'posttransfer' editing and involves deacylation of mischarged Ala-tRNA(Pro). The misacylated Cys-tRNA(Pro) is not edited by ProRS. The polypeptide is Proline--tRNA ligase (Aeromonas hydrophila subsp. hydrophila (strain ATCC 7966 / DSM 30187 / BCRC 13018 / CCUG 14551 / JCM 1027 / KCTC 2358 / NCIMB 9240 / NCTC 8049)).